We begin with the raw amino-acid sequence, 73 residues long: Conotoxin MaI51 (73 aa).

The N-terminal stretch at 1–19 is a signal peptide; sequence MQKLTILLLVAAVLLSTQA. Residues 20 to 41 constitute a propeptide that is removed on maturation; sequence LNQEKRPKEMINVLSKGKTNAE. At Q46 the chain carries Pyrrolidone carboxylic acid. 3 cysteine pairs are disulfide-bonded: C47–C61, C54–C65, and C60–C69. I72 carries the post-translational modification Isoleucine amide.

The protein belongs to the conotoxin O2 superfamily. Expressed by the venom duct.

The protein resides in the secreted. This is Conotoxin MaI51 from Conus marmoreus (Marble cone).